The following is a 167-amino-acid chain: NADH-quinone oxidoreductase subunit B (167 aa).

[4Fe-4S] cluster is bound by residues cysteine 48, cysteine 49, cysteine 113, and cysteine 143.

It belongs to the complex I 20 kDa subunit family. As to quaternary structure, NDH-1 is composed of 14 different subunits. Subunits NuoB, C, D, E, F, and G constitute the peripheral sector of the complex. Requires [4Fe-4S] cluster as cofactor.

The protein resides in the cell membrane. The catalysed reaction is a quinone + NADH + 5 H(+)(in) = a quinol + NAD(+) + 4 H(+)(out). In terms of biological role, NDH-1 shuttles electrons from NADH, via FMN and iron-sulfur (Fe-S) centers, to quinones in the respiratory chain. Couples the redox reaction to proton translocation (for every two electrons transferred, four hydrogen ions are translocated across the cytoplasmic membrane), and thus conserves the redox energy in a proton gradient. This chain is NADH-quinone oxidoreductase subunit B, found in Wolbachia pipientis subsp. Culex pipiens (strain wPip).